A 386-amino-acid polypeptide reads, in one-letter code: MKFVDEAVIRVEAGDGGSGCVSFRREKYVPDGGPDGGDGGDGGSVYLQADESFNTLIDFQFERFHRAERGKNGRGRDCTGHGGEDLVLKVPVGTRAIDEETEESLGDLTAHGQRMLVAKGGFHGLGNTRFKSSTNRAPRQKTLGTPGEVRSLKLELMLLADVGLLGMPNAGKSTFIRSVSRAKPKVADYPFTTLVPNLGVVNPRHGQSFVIADIPGLIEGAADGAGLGVRFLKHLERCRVLLHLVDIDPIDGSDPIESARAIVGELEKHSPKLASKPRWLVINKKDLLLEEELQERIDHIVKELEWKGEVFTISAYNREGTEELSLKLVDFIDSLPEEEEVDVEAEVEFKWDNYHKDSDSLNEDFDDSDDDDFDDDDYDVEVIYQR.

The Obg domain occupies 1 to 159 (MKFVDEAVIR…RSLKLELMLL (159 aa)). The region spanning 160–333 (ADVGLLGMPN…LSLKLVDFID (174 aa)) is the OBG-type G domain. GTP contacts are provided by residues 166-173 (GMPNAGKS), 191-195 (FTTLV), 213-216 (DIPG), 283-286 (NKKD), and 314-316 (SAY). Mg(2+) contacts are provided by Ser173 and Thr193. A disordered region spans residues 356 to 375 (KDSDSLNEDFDDSDDDDFDD). Over residues 360-375 (SLNEDFDDSDDDDFDD) the composition is skewed to acidic residues.

It belongs to the TRAFAC class OBG-HflX-like GTPase superfamily. OBG GTPase family. In terms of assembly, monomer. The cofactor is Mg(2+).

It is found in the cytoplasm. Functionally, an essential GTPase which binds GTP, GDP and possibly (p)ppGpp with moderate affinity, with high nucleotide exchange rates and a fairly low GTP hydrolysis rate. Plays a role in control of the cell cycle, stress response, ribosome biogenesis and in those bacteria that undergo differentiation, in morphogenesis control. This is GTPase Obg from Shewanella sediminis (strain HAW-EB3).